Consider the following 207-residue polypeptide: Guanylate kinase (207 aa).

The Guanylate kinase-like domain occupies 5–184 (GNLFIVSAPS…ALADLSAIIR (180 aa)). 12-19 (APSGAGKS) contributes to the ATP binding site. The tract at residues 30–49 (PSDKQVSVSHTTRKPRPGEV) is disordered.

This sequence belongs to the guanylate kinase family.

It localises to the cytoplasm. The enzyme catalyses GMP + ATP = GDP + ADP. In terms of biological role, essential for recycling GMP and indirectly, cGMP. This chain is Guanylate kinase, found in Shewanella frigidimarina (strain NCIMB 400).